The primary structure comprises 103 residues: MSSSIPSFDFALFLNFRRNSVILSFSLISNIRVLLCDANRQLSYLTFSSFLSAFSCEICFIFASSFLILNIHTSVMSTLSQLNTQDFCKTEYFVNNIIVRIQS.

This is an uncharacterized protein from Saccharomyces cerevisiae (strain ATCC 204508 / S288c) (Baker's yeast).